A 197-amino-acid polypeptide reads, in one-letter code: Ribosome maturation factor RimP (197 aa).

Belongs to the RimP family.

Its subcellular location is the cytoplasm. Required for maturation of 30S ribosomal subunits. In Acidovorax ebreus (strain TPSY) (Diaphorobacter sp. (strain TPSY)), this protein is Ribosome maturation factor RimP.